A 1170-amino-acid chain; its full sequence is Probable mRNA-capping enzyme (1170 aa).

Lysine 292 (N6-GMP-lysine intermediate) is an active-site residue. Residues 684 to 1007 (SNAAGMRAFN…LNRYYVFRKT (324 aa)) enclose the mRNA cap 0 methyltransferase domain. Residue 693-694 (NN) participates in mRNA binding. Residues lysine 697, glycine 715, aspartate 737, and 813-815 (QFT) contribute to the S-adenosyl-L-methionine site.

It in the N-terminal section; belongs to the dsDNA virus mRNA guanylyltransferase family. The protein in the C-terminal section; belongs to the class I-like SAM-binding methyltransferase superfamily. mRNA cap 0 methyltransferase family.

The protein resides in the virion. The enzyme catalyses a 5'-end triphospho-ribonucleoside in mRNA + H2O = a 5'-end diphospho-ribonucleoside in mRNA + phosphate + H(+). It carries out the reaction a 5'-end diphospho-ribonucleoside in mRNA + GTP + H(+) = a 5'-end (5'-triphosphoguanosine)-ribonucleoside in mRNA + diphosphate. The catalysed reaction is a 5'-end (5'-triphosphoguanosine)-ribonucleoside in mRNA + S-adenosyl-L-methionine = a 5'-end (N(7)-methyl 5'-triphosphoguanosine)-ribonucleoside in mRNA + S-adenosyl-L-homocysteine. Its pathway is mRNA processing; mRNA capping. In terms of biological role, responsible for methylating the 5'-cap structure of mRNAs. In Acanthamoeba polyphaga mimivirus (APMV), this protein is Probable mRNA-capping enzyme.